Here is a 191-residue protein sequence, read N- to C-terminus: NAD(P)H-dependent FMN reductase LOT6 (191 aa).

FMN is bound by residues R11, 94–97 (QYNW), and Y124.

As to quaternary structure, homodimer.

It is found in the cytoplasm. It localises to the nucleus. It carries out the reaction FMNH2 + NADP(+) = FMN + NADPH + 2 H(+). The enzyme catalyses FMNH2 + NAD(+) = FMN + NADH + 2 H(+). Functionally, has several reductase activities that are NAD(P)H-dependent and involve FMN as a cofactor, ferricyanide being the best substrate for reduction. May be involved in ferric iron assimilation. In Saccharomyces cerevisiae (strain ATCC 204508 / S288c) (Baker's yeast), this protein is NAD(P)H-dependent FMN reductase LOT6 (LOT6).